Consider the following 345-residue polypeptide: L-Ala-D/L-Glu epimerase (345 aa).

2 residues coordinate substrate: Thr134 and Lys159. Lys161 functions as the Proton acceptor; specific for (R)-substrate epimerization in the catalytic mechanism. Asp188 contacts Mg(2+). A substrate-binding site is contributed by Asn190. Residues Glu216 and Asp241 each contribute to the Mg(2+) site. Residue Lys265 is the Proton acceptor; specific for (S)-substrate epimerization of the active site. Cys292, Asp317, and Asp319 together coordinate substrate.

The protein belongs to the mandelate racemase/muconate lactonizing enzyme family. It depends on Mg(2+) as a cofactor.

The catalysed reaction is L-alanyl-L-glutamate = L-alanyl-D-glutamate. Its pathway is cell wall degradation; peptidoglycan degradation. Its function is as follows. Catalyzes the epimerization of L-Ala-D-Glu to L-Ala-L-Glu and has probably a role in the metabolism of the murein peptide, of which L-Ala-D-Glu is a component. Is also able to catalyze the reverse reaction and the epimerization of a broad range of other dipeptides; is most efficient with L-Ala-D/L-Phe, L-Ala-D/L-Tyr, and L-Ala-D/L-His. In Thermotoga maritima (strain ATCC 43589 / DSM 3109 / JCM 10099 / NBRC 100826 / MSB8), this protein is L-Ala-D/L-Glu epimerase.